Here is a 39-residue protein sequence, read N- to C-terminus: Photosystem II reaction center protein Y (39 aa).

The helical transmembrane segment at leucine 7 to isoleucine 25 threads the bilayer.

This sequence belongs to the PsbY family. PSII is composed of 1 copy each of membrane proteins PsbA, PsbB, PsbC, PsbD, PsbE, PsbF, PsbH, PsbI, PsbJ, PsbK, PsbL, PsbM, PsbT, PsbX, PsbY, PsbZ, Psb30/Ycf12, peripheral proteins PsbO, CyanoQ (PsbQ), PsbU, PsbV and a large number of cofactors. It forms dimeric complexes.

It is found in the cellular thylakoid membrane. Its function is as follows. Loosely associated component of the core of photosystem II (PSII), it is not always seen in crystals. PSII is a light-driven water plastoquinone oxidoreductase, using light energy to abstract electrons from H(2)O, generating a proton gradient subsequently used for ATP formation. The protein is Photosystem II reaction center protein Y of Trichodesmium erythraeum (strain IMS101).